Here is a 111-residue protein sequence, read N- to C-terminus: uncharacterized protein (111 aa).

2 helical membrane passes run 45–65 (AFLI…LLVI) and 91–111 (LPAG…ILHI).

The protein localises to the cell membrane. This is an uncharacterized protein from Methanothermobacter thermautotrophicus (strain ATCC 29096 / DSM 1053 / JCM 10044 / NBRC 100330 / Delta H) (Methanobacterium thermoautotrophicum).